Consider the following 618-residue polypeptide: MARPIADLIHFNSTTVTASGDVYYGPGGGTGIGPIARPIEHGLDSSTENGWQEFESYADVGVDPRRYVPLQVKEKRREIELQFRDAEKKLEASVQAELDKADAALGPAKNLAPLDVINRSLTIVGNALQQKNQKLLLNQKKITSLGAKNFLTRTAEEIGEQAVREGNINGPEAYMRFLDREMEGLTAAYNVKLFTEAISSLQIRMNTLTAAKASIEAAAANKAREQAAAEAKRKAEEQARQQAAIRAANTYAMPANGSVVATAAGRGLIQVAQGAASLAQAISDAIAVLGRVLASAPSVMAVGFASLTYSSRTAEQWQDQTPDSVRYALGMDAAKLGLPPSVNLNAVAKASGTVDLPMRLTNEARGNTTTLSVVSTDGVSVPKAVPVRMAAYNATTGLYEVTVPSTTAEAPPLILTWTPASPPGNQNPSSTTPVVPKPVPVYEGATLTPVKATPETYPGVITLPEDLIIGFPADSGIKPIYVMFRDPRDVPGAATGKGQPVSGNWLGAASQGEGAPIPSQIADKLRGKTFKNWRDFREQFWIAVANDPELSKQFNPGSLAVMRDGGAPYVRESEQAGGRIKIEIHHKVRVADGGGVYNMGNLVAVTPKRHIEIHKGGK.

It belongs to the colicin/pyosin nuclease family. In terms of assembly, purified pyocin S1 makes up a complex of the two (large and small) proteins. The large protein, but not the pyocin complex, shows in vitro DNase activity.

In terms of biological role, causes breakdown of chromosomal DNA as well as complete inhibition of lipid synthesis in sensitive cells. The chain is Pyocin-S1 (pys1) from Pseudomonas aeruginosa.